The primary structure comprises 67 residues: Conotoxin Cal6.35 (67 aa).

Positions 1-22 (MKLTCVLIVAVLILTACQVIAA) are cleaved as a signal peptide. Cystine bridges form between Cys43/Cys53, Cys46/Cys59, and Cys52/Cys66.

It belongs to the conotoxin O1 superfamily. In terms of tissue distribution, expressed by the venom duct.

The protein localises to the secreted. In terms of biological role, probable neurotoxin. The protein is Conotoxin Cal6.35 of Californiconus californicus (California cone).